Consider the following 223-residue polypeptide: N-(5'-phosphoribosyl)anthranilate isomerase (223 aa).

Belongs to the TrpF family.

It carries out the reaction N-(5-phospho-beta-D-ribosyl)anthranilate = 1-(2-carboxyphenylamino)-1-deoxy-D-ribulose 5-phosphate. The protein operates within amino-acid biosynthesis; L-tryptophan biosynthesis; L-tryptophan from chorismate: step 3/5. This chain is N-(5'-phosphoribosyl)anthranilate isomerase, found in Moorella thermoacetica (strain ATCC 39073 / JCM 9320).